Consider the following 360-residue polypeptide: tRNA-specific 2-thiouridylase MnmA (360 aa).

ATP is bound by residues 8 to 15 (GMSGGVDS) and methionine 34. The segment at 94–96 (NPD) is interaction with target base in tRNA. Cysteine 99 acts as the Nucleophile in catalysis. Cysteine 99 and cysteine 195 are oxidised to a cystine. Residue glycine 123 participates in ATP binding. Residues 145–147 (KDQ) are interaction with tRNA. The Cysteine persulfide intermediate role is filled by cysteine 195. Residues 307–308 (RY) are interaction with tRNA.

This sequence belongs to the MnmA/TRMU family.

It is found in the cytoplasm. The enzyme catalyses S-sulfanyl-L-cysteinyl-[protein] + uridine(34) in tRNA + AH2 + ATP = 2-thiouridine(34) in tRNA + L-cysteinyl-[protein] + A + AMP + diphosphate + H(+). Functionally, catalyzes the 2-thiolation of uridine at the wobble position (U34) of tRNA, leading to the formation of s(2)U34. The polypeptide is tRNA-specific 2-thiouridylase MnmA (Methylobacillus flagellatus (strain ATCC 51484 / DSM 6875 / VKM B-1610 / KT)).